The sequence spans 419 residues: GTPase Obg (419 aa).

The Obg domain maps to 2–159; the sequence is SAFVDAVTVE…FLAKVELQVL (158 aa). The 166-residue stretch at 160-325 folds into the OBG-type G domain; it reads ADVGLLGYPN…LKYEIATTLK (166 aa). GTP contacts are provided by residues 166–173, 191–195, 212–215, 279–282, and 306–308; these read GYPNVGKS, FTTLS, DLPG, NKMD, and SAL. 2 residues coordinate Mg(2+): Ser173 and Thr193. The OCT domain occupies 341–419; that stretch reads LNAEDAVDFI…IFSYEFEYLE (79 aa).

This sequence belongs to the TRAFAC class OBG-HflX-like GTPase superfamily. OBG GTPase family. As to quaternary structure, monomer. It depends on Mg(2+) as a cofactor.

The protein resides in the cytoplasm. In terms of biological role, an essential GTPase which binds GTP, GDP and possibly (p)ppGpp with moderate affinity, with high nucleotide exchange rates and a fairly low GTP hydrolysis rate. Plays a role in control of the cell cycle, stress response, ribosome biogenesis and in those bacteria that undergo differentiation, in morphogenesis control. The polypeptide is GTPase Obg (Acholeplasma laidlawii (strain PG-8A)).